A 210-amino-acid chain; its full sequence is Probable GTP-binding protein EngB (210 aa).

The 175-residue stretch at 27–201 (MGIEVAFAGR…HQKLDIWFSQ (175 aa)) folds into the EngB-type G domain. GTP is bound by residues 35-42 (GRSNAGKS), 62-66 (GRTQL), 80-83 (DLPG), 147-150 (TKAD), and 180-182 (FSV). Mg(2+) contacts are provided by Ser-42 and Thr-64.

The protein belongs to the TRAFAC class TrmE-Era-EngA-EngB-Septin-like GTPase superfamily. EngB GTPase family. Requires Mg(2+) as cofactor.

Necessary for normal cell division and for the maintenance of normal septation. The sequence is that of Probable GTP-binding protein EngB from Photorhabdus laumondii subsp. laumondii (strain DSM 15139 / CIP 105565 / TT01) (Photorhabdus luminescens subsp. laumondii).